A 253-amino-acid polypeptide reads, in one-letter code: E3 ubiquitin-protein ligase MARCHF3 (253 aa).

The RING-CH-type zinc finger occupies 63–123 (SPFNDRPMCR…ELCHFRFAVE (61 aa)). Zn(2+)-binding residues include Cys-71, Cys-74, Cys-87, Cys-89, His-97, Cys-100, Cys-113, and Cys-116. 2 helical membrane-spanning segments follow: residues 145 to 165 (LFGDMVCFLFITPLATISGWL) and 182 to 202 (AVGLIALTVALFTIYLFWTLV). A phosphoserine mark is found at Ser-237 and Ser-243.

Interacts with MARCHF2 and STX6.

The protein resides in the cytoplasmic vesicle membrane. It is found in the early endosome membrane. It catalyses the reaction S-ubiquitinyl-[E2 ubiquitin-conjugating enzyme]-L-cysteine + [acceptor protein]-L-lysine = [E2 ubiquitin-conjugating enzyme]-L-cysteine + N(6)-ubiquitinyl-[acceptor protein]-L-lysine.. It functions in the pathway protein modification; protein ubiquitination. E3 ubiquitin-protein ligase which may be involved in endosomal trafficking. E3 ubiquitin ligases accept ubiquitin from an E2 ubiquitin-conjugating enzyme in the form of a thioester and then directly transfer the ubiquitin to targeted substrates. In Bos taurus (Bovine), this protein is E3 ubiquitin-protein ligase MARCHF3 (MARCHF3).